The primary structure comprises 357 residues: Protein RecA (357 aa).

ATP is bound at residue 71–78 (GPESSGKT).

Belongs to the RecA family.

It localises to the cytoplasm. Its function is as follows. Can catalyze the hydrolysis of ATP in the presence of single-stranded DNA, the ATP-dependent uptake of single-stranded DNA by duplex DNA, and the ATP-dependent hybridization of homologous single-stranded DNAs. It interacts with LexA causing its activation and leading to its autocatalytic cleavage. The chain is Protein RecA from Ehrlichia ruminantium (strain Gardel).